The following is a 142-amino-acid chain: Large ribosomal subunit protein uL11 (142 aa).

It belongs to the universal ribosomal protein uL11 family. Part of the ribosomal stalk of the 50S ribosomal subunit. Interacts with L10 and the large rRNA to form the base of the stalk. L10 forms an elongated spine to which L12 dimers bind in a sequential fashion forming a multimeric L10(L12)X complex. Post-translationally, one or more lysine residues are methylated.

Functionally, forms part of the ribosomal stalk which helps the ribosome interact with GTP-bound translation factors. The protein is Large ribosomal subunit protein uL11 of Bartonella tribocorum (strain CIP 105476 / IBS 506).